The following is an 85-amino-acid chain: MNYLIVISFALLLMTGVQSGRDAYIADSENCTYTCALNPYCNDLCTKNGAKSGYCQWAGRYGNACWCIDLPDKVPIRISGSCRGR.

An N-terminal signal peptide occupies residues 1 to 19; that stretch reads MNYLIVISFALLLMTGVQS. An LCN-type CS-alpha/beta domain is found at 21 to 83; sequence RDAYIADSEN…VPIRISGSCR (63 aa). Intrachain disulfides connect Cys-31–Cys-82, Cys-35–Cys-55, Cys-41–Cys-65, and Cys-45–Cys-67.

The protein belongs to the long (4 C-C) scorpion toxin superfamily. Sodium channel inhibitor family. Alpha subfamily. As to expression, expressed by the venom gland.

Its subcellular location is the secreted. Its function is as follows. Alpha toxins bind voltage-independently at site-3 of sodium channels (Nav) and inhibit the inactivation of the activated channels, thereby blocking neuronal transmission. This toxin expressed with the pET-14b vector has low inhibitory activity on sodium channels (11.33% on rNav1.2/SCN2A, 15.96% on mNav1.4/SCN4A and 5.04% on hNav1.5/SCN5A). When expressed with the pET-28a vector, this toxin has higher inhibitory activities (44.12% on rNav1.2/SCN2A, 25.40% on mNav1.4/SCN4A and 65.34% on hNav1.5/SCN5A). The chain is Alpha-toxin BmalphaTx47 from Olivierus martensii (Manchurian scorpion).